Consider the following 406-residue polypeptide: 3-oxoacyl-[acyl-carrier-protein] synthase 1 (406 aa).

Positions 1-405 (MRRVVITGIG…GTNVSLIVKK (405 aa)) constitute a Ketosynthase family 3 (KS3) domain. Active-site for beta-ketoacyl synthase activity residues include Cys164, His299, and His335.

It belongs to the thiolase-like superfamily. Beta-ketoacyl-ACP synthases family. As to quaternary structure, homodimer.

The protein resides in the cytoplasm. The catalysed reaction is a fatty acyl-[ACP] + malonyl-[ACP] + H(+) = a 3-oxoacyl-[ACP] + holo-[ACP] + CO2. It catalyses the reaction (3Z)-decenoyl-[ACP] + malonyl-[ACP] + H(+) = 3-oxo-(5Z)-dodecenoyl-[ACP] + holo-[ACP] + CO2. Its pathway is lipid metabolism; fatty acid biosynthesis. In terms of biological role, involved in the type II fatty acid elongation cycle. Catalyzes the elongation of a wide range of acyl-ACP by the addition of two carbons from malonyl-ACP to an acyl acceptor. Can also use unsaturated fatty acids. Catalyzes a key reaction in unsaturated fatty acid (UFA) synthesis, the elongation of the cis-3-decenoyl-ACP produced by FabA. The sequence is that of 3-oxoacyl-[acyl-carrier-protein] synthase 1 (fabB) from Buchnera aphidicola subsp. Acyrthosiphon pisum (strain APS) (Acyrthosiphon pisum symbiotic bacterium).